The primary structure comprises 141 residues: HTH-type transcriptional repressor NsrR (141 aa).

Positions 2–129 (QLTSFTDYGL…DNYTLADLVE (128 aa)) constitute an HTH rrf2-type domain. Residues 28-51 (ISEVTEVYGVSRNHMVKIINQLSR) constitute a DNA-binding region (H-T-H motif). [2Fe-2S] cluster contacts are provided by Cys-91, Cys-96, and Cys-102.

[2Fe-2S] cluster is required as a cofactor.

In terms of biological role, nitric oxide-sensitive repressor of genes involved in protecting the cell against nitrosative stress. May require iron for activity. This chain is HTH-type transcriptional repressor NsrR, found in Klebsiella pneumoniae subsp. pneumoniae (strain ATCC 700721 / MGH 78578).